Here is a 480-residue protein sequence, read N- to C-terminus: Probable ATP-dependent RNA helicase DDX49 (480 aa).

The Q motif signature appears at 2–30 (AGFAEIGLSSWLVEQCRQLGLKQPTPVQL). One can recognise a Helicase ATP-binding domain in the interval 33–207 (IPAILEGRDC…GLATNEPFFW (175 aa)). An ATP-binding site is contributed by 46–53 (AKTGSGKT). A DEAD box motif is present at residues 152–155 (DEAD). The 165-residue stretch at 218–382 (QLDQRYLLVP…ELVVEEAEVL (165 aa)) folds into the Helicase C-terminal domain. The disordered stretch occupies residues 438-480 (QQNRRFKEKVGQTLRRQKAGSTVRRSRPPRSRPQEPAQAEAQD).

Belongs to the DEAD box helicase family. DDX49/DBP8 subfamily.

It is found in the nucleus. It localises to the nucleolus. The catalysed reaction is ATP + H2O = ADP + phosphate + H(+). Its function is as follows. ATP-dependent RNA helicase that plays a role in various aspects of RNA metabolism including the regulation of mRNA export and the levels of pre-ribosomal RNA. Regulates the stability and synthesis of pre-ribosomal RNA and thereby regulates cell proliferation. Also possesses antiviral activity by recognizing gammaherpesvirus transcripts in the context of lytic reactivation. The sequence is that of Probable ATP-dependent RNA helicase DDX49 (Ddx49) from Mus musculus (Mouse).